Reading from the N-terminus, the 153-residue chain is Small ribosomal subunit protein uS5c (153 aa).

The 64-residue stretch at 11-74 (WQERVIQIRR…VDAKKQLINI (64 aa)) folds into the S5 DRBM domain.

It belongs to the universal ribosomal protein uS5 family. Part of the 30S ribosomal subunit. Contacts protein S4.

The protein localises to the plastid. It localises to the chloroplast. With S4 and S12 plays an important role in translational accuracy. The sequence is that of Small ribosomal subunit protein uS5c (rps5) from Cyanidioschyzon merolae (strain NIES-3377 / 10D) (Unicellular red alga).